A 428-amino-acid polypeptide reads, in one-letter code: Trigger factor (428 aa).

In terms of domain architecture, PPIase FKBP-type spans 163-248 (GDTVVIDFEG…LHEIKTKQLP (86 aa)).

Belongs to the FKBP-type PPIase family. Tig subfamily.

The protein resides in the cytoplasm. It catalyses the reaction [protein]-peptidylproline (omega=180) = [protein]-peptidylproline (omega=0). In terms of biological role, involved in protein export. Acts as a chaperone by maintaining the newly synthesized protein in an open conformation. Functions as a peptidyl-prolyl cis-trans isomerase. The polypeptide is Trigger factor (Anoxybacillus flavithermus (strain DSM 21510 / WK1)).